Reading from the N-terminus, the 693-residue chain is Histone-lysine N-methyltransferase, H3 lysine-9 specific SUVH7 (693 aa).

Disordered regions lie at residues Trp64–Met99 and Asp111–Glu175. Residues Lys129–Ser141 constitute a DNA-binding region (a.T hook). Positions Gly227–Arg373 constitute a YDG domain. The 63-residue stretch at Gln454 to Gly516 folds into the Pre-SET domain. Zn(2+) is bound by residues Cys458, Cys461, Cys466, Cys471, Cys473, Cys498, Cys502, Cys504, and Cys508. One can recognise an SET domain in the interval Leu519 to Gly660. S-adenosyl-L-methionine-binding positions include Cys529 to Trp531, Asp562, Tyr564, Arg614, and Asn617 to His618. Residues Cys620, Cys681, Cys683, and Cys688 each contribute to the Zn(2+) site. In terms of domain architecture, Post-SET spans Gly677–Thr693.

This sequence belongs to the class V-like SAM-binding methyltransferase superfamily. Histone-lysine methyltransferase family. Suvar3-9 subfamily.

Its subcellular location is the nucleus. It is found in the chromosome. The protein localises to the centromere. The enzyme catalyses N(6)-methyl-L-lysyl(9)-[histone H3] + S-adenosyl-L-methionine = N(6),N(6)-dimethyl-L-lysyl(9)-[histone H3] + S-adenosyl-L-homocysteine + H(+). The catalysed reaction is L-lysyl(9)-[histone H3] + S-adenosyl-L-methionine = N(6)-methyl-L-lysyl(9)-[histone H3] + S-adenosyl-L-homocysteine + H(+). Functionally, histone methyltransferase. Methylates 'Lys-9' of histone H3. H3 'Lys-9' methylation represents a specific tag for epigenetic transcriptional repression. This chain is Histone-lysine N-methyltransferase, H3 lysine-9 specific SUVH7 (SUVH7), found in Arabidopsis thaliana (Mouse-ear cress).